Consider the following 151-residue polypeptide: Cytochrome c-type biogenesis protein CcmE (151 aa).

Topologically, residues 1 to 8 (MNPQRKKR) are cytoplasmic. Residues 9–29 (LFLILGLLAGVAVAVGFALSA) form a helical; Signal-anchor for type II membrane protein membrane-spanning segment. Topologically, residues 30–151 (LQQNINLFYT…QAASGAEAKP (122 aa)) are periplasmic. His124 and Tyr128 together coordinate heme.

This sequence belongs to the CcmE/CycJ family.

Its subcellular location is the cell inner membrane. Heme chaperone required for the biogenesis of c-type cytochromes. Transiently binds heme delivered by CcmC and transfers the heme to apo-cytochromes in a process facilitated by CcmF and CcmH. The polypeptide is Cytochrome c-type biogenesis protein CcmE (Pseudomonas putida (strain W619)).